A 225-amino-acid polypeptide reads, in one-letter code: Nucleolar protein 6 (225 aa).

A disordered region spans residues 1 to 75; it reads MGSEEDKKLT…GGKGKNGKKG (75 aa). Basic residues predominate over residues 9–20; that stretch reads LTKKQLKAQQFR. Residues 21–42 are compositionally biased toward basic and acidic residues; the sequence is KSKEEKDQEKDVKKEQAPEGKR. The residue at position 45 (Ser-45) is a Phosphoserine. Residues 56-75 show a composition bias toward basic residues; sequence KKKRKTRRGRGGKGKNGKKG. Positions 78 to 155 constitute an RRM domain; the sequence is FIVFVGSLPR…KKINVELTVG (78 aa). At Ser-160 the chain carries Phosphoserine. The tract at residues 187–225 is disordered; it reads NDGNQKKIAKTTATAAQTSGTDNKPVPAGIHPDRAKLLK.

It belongs to the RRM NOP6 family.

It localises to the nucleus. Its subcellular location is the nucleolus. Predicted to be involved in rRNA processing. This is Nucleolar protein 6 (NOP6) from Saccharomyces cerevisiae (strain ATCC 204508 / S288c) (Baker's yeast).